The primary structure comprises 485 residues: Rhamnulokinase (485 aa).

Residue 10 to 14 (ASSGR) participates in ATP binding. Substrate-binding positions include Ala-78 and 233 to 235 (HDT). Residue Asp-234 is the Proton acceptor of the active site. Thr-256 is a binding site for ATP. Asn-293 contacts substrate. Residue Gln-301 participates in ATP binding. A disulfide bond links Cys-351 and Cys-368. Gly-400 serves as a coordination point for ATP.

This sequence belongs to the rhamnulokinase family. Mg(2+) is required as a cofactor.

It catalyses the reaction L-rhamnulose + ATP = L-rhamnulose 1-phosphate + ADP + H(+). The protein operates within carbohydrate degradation; L-rhamnose degradation; glycerone phosphate from L-rhamnose: step 2/3. Functionally, involved in the catabolism of L-rhamnose (6-deoxy-L-mannose). Catalyzes the transfer of the gamma-phosphate group from ATP to the 1-hydroxyl group of L-rhamnulose to yield L-rhamnulose 1-phosphate. The sequence is that of Rhamnulokinase from Bacillus subtilis (strain 168).